A 589-amino-acid chain; its full sequence is Threonine--tRNA ligase (589 aa).

The tract at residues 191 to 487 (DHRKIGKNLG…LLEQTKGNFP (297 aa)) is catalytic. C284, H335, and H464 together coordinate Zn(2+).

Belongs to the class-II aminoacyl-tRNA synthetase family. As to quaternary structure, homodimer. Zn(2+) serves as cofactor.

Its subcellular location is the cytoplasm. The catalysed reaction is tRNA(Thr) + L-threonine + ATP = L-threonyl-tRNA(Thr) + AMP + diphosphate + H(+). Catalyzes the attachment of threonine to tRNA(Thr) in a two-step reaction: L-threonine is first activated by ATP to form Thr-AMP and then transferred to the acceptor end of tRNA(Thr). Also edits incorrectly charged L-seryl-tRNA(Thr). This Mycoplasmopsis pulmonis (strain UAB CTIP) (Mycoplasma pulmonis) protein is Threonine--tRNA ligase.